Here is a 104-residue protein sequence, read N- to C-terminus: Sweet protein mabinlin-3 (104 aa).

Cystine bridges form between C4–C53, C17–C42, C43–C91, and C55–C99.

This sequence belongs to the 2S seed storage albumins family. Heterodimer of a small A and a large B chain linked by disulfide bonds.

Functionally, heat stable 2S seed storage protein having sweetness-inducing activity. The sequence is that of Sweet protein mabinlin-3 from Capparis masaikai (Mabinlang).